The sequence spans 289 residues: 4-hydroxybenzoate octaprenyltransferase (289 aa).

The next 7 membrane-spanning stretches (helical) occupy residues 33-53 (LWAL…AVFV), 99-119 (LFVV…TMTI), 141-161 (LPQV…FAAV), 163-183 (ESVP…AVAY), 213-233 (LIIG…GRLN), 238-258 (EFYW…KLIV), and 268-288 (AFLN…MSYW).

The protein belongs to the UbiA prenyltransferase family. Mg(2+) serves as cofactor.

It is found in the cell inner membrane. The enzyme catalyses all-trans-octaprenyl diphosphate + 4-hydroxybenzoate = 4-hydroxy-3-(all-trans-octaprenyl)benzoate + diphosphate. It participates in cofactor biosynthesis; ubiquinone biosynthesis. Its function is as follows. Catalyzes the prenylation of para-hydroxybenzoate (PHB) with an all-trans polyprenyl group. Mediates the second step in the final reaction sequence of ubiquinone-8 (UQ-8) biosynthesis, which is the condensation of the polyisoprenoid side chain with PHB, generating the first membrane-bound Q intermediate 3-octaprenyl-4-hydroxybenzoate. The protein is 4-hydroxybenzoate octaprenyltransferase of Enterobacter sp. (strain 638).